We begin with the raw amino-acid sequence, 255 residues long: Imidazole glycerol phosphate synthase subunit HisF (255 aa).

Catalysis depends on residues Asp-12 and Asp-131.

Belongs to the HisA/HisF family. As to quaternary structure, heterodimer of HisH and HisF.

The protein resides in the cytoplasm. The catalysed reaction is 5-[(5-phospho-1-deoxy-D-ribulos-1-ylimino)methylamino]-1-(5-phospho-beta-D-ribosyl)imidazole-4-carboxamide + L-glutamine = D-erythro-1-(imidazol-4-yl)glycerol 3-phosphate + 5-amino-1-(5-phospho-beta-D-ribosyl)imidazole-4-carboxamide + L-glutamate + H(+). Its pathway is amino-acid biosynthesis; L-histidine biosynthesis; L-histidine from 5-phospho-alpha-D-ribose 1-diphosphate: step 5/9. Its function is as follows. IGPS catalyzes the conversion of PRFAR and glutamine to IGP, AICAR and glutamate. The HisF subunit catalyzes the cyclization activity that produces IGP and AICAR from PRFAR using the ammonia provided by the HisH subunit. In Zymomonas mobilis subsp. mobilis (strain ATCC 31821 / ZM4 / CP4), this protein is Imidazole glycerol phosphate synthase subunit HisF.